A 347-amino-acid polypeptide reads, in one-letter code: Fused nickel transport protein NikMN (347 aa).

9 consecutive transmembrane segments (helical) span residues 6–26 (GYLSPVTCAVTFAATVPFWYV), 40–60 (LPLVALVAAFSFVIMMFNLPI), 73–93 (IAAVLLGPWAAVPAISVALLI), 96–116 (IFFGDGGITAFGANCLNMAVV), 140–160 (VIMAGLASYAGLNAAALLAAV), 185–205 (VAVPAMALTHLTIAGAAEFIV), 236–256 (LWAGIGALVVLCPLGLIAAGT), 273–293 (AAMAGASGGVAPPAGLPGGFA), and 319–339 (VLSALLGVALIVAGIGLSAGL).

This sequence belongs to the CbiM family. NikM subfamily. As to quaternary structure, forms an energy-coupling factor (ECF) transporter complex composed of an ATP-binding protein (A component, NikO), a transmembrane protein (T component, NikQ) and a fused possible substrate-capture protein (S component, NikMN) of unknown stoichimetry.

Its subcellular location is the cell inner membrane. Its function is as follows. Part of the energy-coupling factor (ECF) transporter complex NikMNQO involved in nickel import. The complex confers nickel uptake upon expression in E.coli; can also transport cobalt with a very low affinity. In Rhodobacter capsulatus (strain ATCC BAA-309 / NBRC 16581 / SB1003), this protein is Fused nickel transport protein NikMN (nikMN).